Here is a 182-residue protein sequence, read N- to C-terminus: Small ribosomal subunit protein uS5 (182 aa).

The 64-residue stretch at 16–79 folds into the S5 DRBM domain; the sequence is FVDRLVHINR…ESAKRGMIYV (64 aa).

Belongs to the universal ribosomal protein uS5 family. In terms of assembly, part of the 30S ribosomal subunit. Contacts proteins S4 and S8.

In terms of biological role, with S4 and S12 plays an important role in translational accuracy. Functionally, located at the back of the 30S subunit body where it stabilizes the conformation of the head with respect to the body. The polypeptide is Small ribosomal subunit protein uS5 (Bartonella henselae (strain ATCC 49882 / DSM 28221 / CCUG 30454 / Houston 1) (Rochalimaea henselae)).